Consider the following 148-residue polypeptide: Snaclec 2 (148 aa).

Residues 1–23 (MGRFIFVSFGLLVVFLSLSGTEA) form the signal peptide. Cystine bridges form between C27/C38, C55/C144, and C121/C136. A C-type lectin domain is found at 34 to 145 (YDQNCYKAFE…CSGTHSFVCK (112 aa)).

Belongs to the snaclec family. In terms of assembly, heterodimer; disulfide-linked. In terms of tissue distribution, expressed by the venom gland.

It is found in the secreted. Functionally, interferes with one step of hemostasis (modulation of platelet aggregation, or coagulation cascade, for example). The polypeptide is Snaclec 2 (Echis ocellatus (Ocellated saw-scaled viper)).